We begin with the raw amino-acid sequence, 564 residues long: Adenine deaminase (564 aa).

Belongs to the metallo-dependent hydrolases superfamily. Adenine deaminase family. Requires Mn(2+) as cofactor.

The enzyme catalyses adenine + H2O + H(+) = hypoxanthine + NH4(+). The polypeptide is Adenine deaminase (Deinococcus geothermalis (strain DSM 11300 / CIP 105573 / AG-3a)).